The chain runs to 393 residues: Acetyl-CoA acetyltransferase (393 aa).

The active-site Acyl-thioester intermediate is the Cys90. Catalysis depends on proton acceptor residues His349 and Cys379.

It belongs to the thiolase-like superfamily. Thiolase family. In terms of assembly, homotetramer.

Its subcellular location is the cytoplasm. The catalysed reaction is 2 acetyl-CoA = acetoacetyl-CoA + CoA. It participates in biopolymer metabolism; poly-(R)-3-hydroxybutanoate biosynthesis. The protein operates within metabolic intermediate biosynthesis; (R)-mevalonate biosynthesis; (R)-mevalonate from acetyl-CoA: step 1/3. This chain is Acetyl-CoA acetyltransferase, found in Rhizobium meliloti (strain 1021) (Ensifer meliloti).